A 145-amino-acid chain; its full sequence is D-aminoacyl-tRNA deacylase (145 aa).

The Gly-cisPro motif, important for rejection of L-amino acids signature appears at 137 to 138 (GP).

This sequence belongs to the DTD family. In terms of assembly, homodimer.

Its subcellular location is the cytoplasm. The catalysed reaction is glycyl-tRNA(Ala) + H2O = tRNA(Ala) + glycine + H(+). The enzyme catalyses a D-aminoacyl-tRNA + H2O = a tRNA + a D-alpha-amino acid + H(+). Its function is as follows. An aminoacyl-tRNA editing enzyme that deacylates mischarged D-aminoacyl-tRNAs. Also deacylates mischarged glycyl-tRNA(Ala), protecting cells against glycine mischarging by AlaRS. Acts via tRNA-based rather than protein-based catalysis; rejects L-amino acids rather than detecting D-amino acids in the active site. By recycling D-aminoacyl-tRNA to D-amino acids and free tRNA molecules, this enzyme counteracts the toxicity associated with the formation of D-aminoacyl-tRNA entities in vivo and helps enforce protein L-homochirality. This Sodalis glossinidius (strain morsitans) protein is D-aminoacyl-tRNA deacylase.